A 287-amino-acid chain; its full sequence is Small ribosomal subunit protein uS10m (287 aa).

A mitochondrion-targeting transit peptide spans Met1–Leu33. The segment covering Leu33–Leu43 has biased composition (polar residues). The segment at Leu33–Val84 is disordered. Residues Pro63–Thr73 show a composition bias toward basic and acidic residues. Residues Lys74 to Val84 are compositionally biased toward polar residues.

The protein belongs to the universal ribosomal protein uS10 family. As to quaternary structure, part of the mitochondrial small ribosomal subunit.

The protein resides in the mitochondrion. Involved in mitochondrial genome encoded proteins translation. Involved in the binding of tRNA to the ribosomes. The protein is Small ribosomal subunit protein uS10m (rsm10) of Emericella nidulans (strain FGSC A4 / ATCC 38163 / CBS 112.46 / NRRL 194 / M139) (Aspergillus nidulans).